Consider the following 141-residue polypeptide: Hemoglobin subunit alpha (141 aa).

Residues valine 1–arginine 141 form the Globin domain. Serine 3 carries the post-translational modification Phosphoserine. An N6-succinyllysine modification is found at lysine 7. Threonine 8 is modified (phosphothreonine). Lysine 11 carries the post-translational modification N6-succinyllysine. Lysine 16 is modified (N6-acetyllysine; alternate). Lysine 16 carries the post-translational modification N6-succinyllysine; alternate. A Phosphoserine modification is found at serine 35. Residue lysine 40 is modified to N6-succinyllysine. Serine 49 carries the phosphoserine modification. Histidine 58 serves as a coordination point for O2. Heme b is bound at residue histidine 87. Serine 102 carries the post-translational modification Phosphoserine. Residue threonine 108 is modified to Phosphothreonine. 2 positions are modified to phosphoserine: serine 124 and serine 131. Residues threonine 134 and threonine 137 each carry the phosphothreonine modification. Phosphoserine is present on serine 138.

The protein belongs to the globin family. In terms of assembly, heterotetramer of two alpha chains and two beta chains. In terms of tissue distribution, red blood cells.

Involved in oxygen transport from the lung to the various peripheral tissues. This Sciurus carolinensis (Eastern gray squirrel) protein is Hemoglobin subunit alpha.